The chain runs to 305 residues: UDP-3-O-acyl-N-acetylglucosamine deacetylase (305 aa).

Zn(2+)-binding residues include His-78, His-237, and Asp-241. His-264 serves as the catalytic Proton donor.

The protein belongs to the LpxC family. Zn(2+) is required as a cofactor.

The catalysed reaction is a UDP-3-O-[(3R)-3-hydroxyacyl]-N-acetyl-alpha-D-glucosamine + H2O = a UDP-3-O-[(3R)-3-hydroxyacyl]-alpha-D-glucosamine + acetate. It participates in glycolipid biosynthesis; lipid IV(A) biosynthesis; lipid IV(A) from (3R)-3-hydroxytetradecanoyl-[acyl-carrier-protein] and UDP-N-acetyl-alpha-D-glucosamine: step 2/6. Catalyzes the hydrolysis of UDP-3-O-myristoyl-N-acetylglucosamine to form UDP-3-O-myristoylglucosamine and acetate, the committed step in lipid A biosynthesis. The protein is UDP-3-O-acyl-N-acetylglucosamine deacetylase of Burkholderia ambifaria (strain MC40-6).